A 166-amino-acid polypeptide reads, in one-letter code: UPF0260 protein GbCGDNIH1_2046 (166 aa).

The tract at residues 147–166 (RFPRPRRPRQEPAGKTADES) is disordered. Positions 154–166 (PRQEPAGKTADES) are enriched in basic and acidic residues.

This sequence belongs to the UPF0260 family.

The sequence is that of UPF0260 protein GbCGDNIH1_2046 from Granulibacter bethesdensis (strain ATCC BAA-1260 / CGDNIH1).